The sequence spans 57 residues: Potassium channel toxin alpha-KTx 8.8 (57 aa).

Positions 1 to 19 are cleaved as a signal peptide; that stretch reads MCRLYAIILIVLVMNVIMT. Residues 20 to 28 constitute a propeptide that is removed on maturation; sequence IIPDSKVEV. 3 cysteine pairs are disulfide-bonded: cysteine 31/cysteine 47, cysteine 34/cysteine 52, and cysteine 38/cysteine 54.

This sequence belongs to the short scorpion toxin superfamily. Potassium channel inhibitor family. Alpha-KTx 08 subfamily. Contains 3 disulfide bonds. In terms of tissue distribution, expressed by the venom gland.

Its subcellular location is the secreted. Its function is as follows. Selectively inhibits voltage-gated potassium channels rKv1.2/KCNA2 (IC(50)=331 nM) and hKv1.3/KCNA3 (IC(50)=503 nM). Partially inihibts rKv1.6/KCNA6 (IC(50)=9983 nM). The sequence is that of Potassium channel toxin alpha-KTx 8.8 from Orthochirus scrobiculosus (Central Asian scorpion).